A 408-amino-acid chain; its full sequence is ATP phosphoribosyltransferase regulatory subunit (408 aa).

It belongs to the class-II aminoacyl-tRNA synthetase family. HisZ subfamily. In terms of assembly, heteromultimer composed of HisG and HisZ subunits.

It localises to the cytoplasm. Its pathway is amino-acid biosynthesis; L-histidine biosynthesis; L-histidine from 5-phospho-alpha-D-ribose 1-diphosphate: step 1/9. In terms of biological role, required for the first step of histidine biosynthesis. May allow the feedback regulation of ATP phosphoribosyltransferase activity by histidine. The chain is ATP phosphoribosyltransferase regulatory subunit from Thermosynechococcus vestitus (strain NIES-2133 / IAM M-273 / BP-1).